Here is a 253-residue protein sequence, read N- to C-terminus: REF/SRPP-like protein OsI_017815 (253 aa).

The interval 1–26 is disordered; the sequence is MADSGSDAPISNRPEEEVTVEKTPEM. Basic and acidic residues predominate over residues 13 to 26; that stretch reads RPEEEVTVEKTPEM.

It belongs to the REF/SRPP family.

This chain is REF/SRPP-like protein OsI_017815, found in Oryza sativa subsp. indica (Rice).